Here is a 254-residue protein sequence, read N- to C-terminus: Phosphoglycerate mutase 1 (254 aa).

Substrate is bound by residues arginine 10–asparagine 17 and serine 23–glycine 24. Histidine 11 serves as the catalytic Tele-phosphohistidine intermediate. Residues serine 14 and serine 23 each carry the phosphoserine modification. Position 26 is a phosphotyrosine (tyrosine 26). The residue at position 31 (serine 31) is a Phosphoserine. Residues arginine 62, glutamate 89–tyrosine 92, and lysine 100 each bind substrate. The active-site Proton donor/acceptor is glutamate 89. N6-acetyllysine is present on lysine 106. Substrate is bound at residue arginine 116–arginine 117. Serine 118 is modified (phosphoserine). Glycine 187–asparagine 188 contacts substrate. Residue lysine 251 is modified to N6-acetyllysine; alternate. An N6-succinyllysine; alternate modification is found at lysine 251. Lysine 253 and lysine 254 each carry N6-acetyllysine.

Belongs to the phosphoglycerate mutase family. BPG-dependent PGAM subfamily. In terms of assembly, homodimer. Acetylated at Lys-253, Lys-253 and Lys-254 under high glucose condition. Acetylation increases catalytic activity. Under glucose restriction SIRT1 levels dramatically increase and it deacetylates the enzyme.

It catalyses the reaction (2R)-2-phosphoglycerate = (2R)-3-phosphoglycerate. The catalysed reaction is (2R)-3-phospho-glyceroyl phosphate = (2R)-2,3-bisphosphoglycerate + H(+). In terms of biological role, catalyzes the interconversion of 2-phosphoglycerate and 3-phosphoglyceratea crucial step in glycolysis, by using 2,3-bisphosphoglycerate. Also catalyzes the interconversion of (2R)-2,3-bisphosphoglycerate and (2R)-3-phospho-glyceroyl phosphate. The protein is Phosphoglycerate mutase 1 of Mus musculus (Mouse).